Reading from the N-terminus, the 1000-residue chain is Bifunctional glutamine synthetase adenylyltransferase/adenylyl-removing enzyme (1000 aa).

Positions 1 to 481 (MTAPGRRSST…LHEKLFYRPL (481 aa)) are adenylyl removase. The tract at residues 487–1000 (QLAPGEARLS…AVVDEQFYGA (514 aa)) is adenylyl transferase.

It belongs to the GlnE family. Requires Mg(2+) as cofactor.

It catalyses the reaction [glutamine synthetase]-O(4)-(5'-adenylyl)-L-tyrosine + phosphate = [glutamine synthetase]-L-tyrosine + ADP. The enzyme catalyses [glutamine synthetase]-L-tyrosine + ATP = [glutamine synthetase]-O(4)-(5'-adenylyl)-L-tyrosine + diphosphate. Involved in the regulation of glutamine synthetase GlnA, a key enzyme in the process to assimilate ammonia. When cellular nitrogen levels are high, the C-terminal adenylyl transferase (AT) inactivates GlnA by covalent transfer of an adenylyl group from ATP to specific tyrosine residue of GlnA, thus reducing its activity. Conversely, when nitrogen levels are low, the N-terminal adenylyl removase (AR) activates GlnA by removing the adenylyl group by phosphorolysis, increasing its activity. The regulatory region of GlnE binds the signal transduction protein PII (GlnB) which indicates the nitrogen status of the cell. This chain is Bifunctional glutamine synthetase adenylyltransferase/adenylyl-removing enzyme, found in Streptomyces avermitilis (strain ATCC 31267 / DSM 46492 / JCM 5070 / NBRC 14893 / NCIMB 12804 / NRRL 8165 / MA-4680).